The following is a 278-amino-acid chain: tRNA(Phe) (4-demethylwyosine(37)-C(7)) aminocarboxypropyltransferase (278 aa).

Residues serine 109, arginine 116, glutamate 155, and 183–184 (DN) contribute to the S-adenosyl-L-methionine site.

Belongs to the class I-like SAM-binding methyltransferase superfamily. TRM5/TYW2 family.

The protein localises to the cytoplasm. The enzyme catalyses 4-demethylwyosine(37) in tRNA(Phe) + S-adenosyl-L-methionine = 4-demethyl-7-[(3S)-3-amino-3-carboxypropyl]wyosine(37) in tRNA(Phe) + S-methyl-5'-thioadenosine + H(+). S-adenosyl-L-methionine-dependent transferase that acts as a component of the wyosine derivatives biosynthesis pathway. Catalyzes the transfer of the alpha-amino-alpha-carboxypropyl (acp) group from S-adenosyl-L-methionine to 4-demethylwyosine (imG-14), forming 7-aminocarboxypropyl-demethylwyosine (wybutosine-86) at position 37 of tRNA(Phe). This is tRNA(Phe) (4-demethylwyosine(37)-C(7)) aminocarboxypropyltransferase from Pyrococcus horikoshii (strain ATCC 700860 / DSM 12428 / JCM 9974 / NBRC 100139 / OT-3).